A 132-amino-acid polypeptide reads, in one-letter code: Fumarate reductase subunit C (132 aa).

A run of 3 helical transmembrane segments spans residues 36–56, 70–90, and 110–130; these read AIPT…LGSL, IVII…VTYY, and IITM…LVFM.

It belongs to the FrdC family. As to quaternary structure, part of an enzyme complex containing four subunits: a flavoprotein (FrdA), an iron-sulfur protein (FrdB), and two hydrophobic anchor proteins (FrdC and FrdD).

It localises to the cell inner membrane. Anchors the catalytic components of the fumarate reductase complex to the cell membrane, binds quinones. The protein is Fumarate reductase subunit C of Pasteurella multocida (strain Pm70).